The sequence spans 858 residues: Bifunctional uridylyltransferase/uridylyl-removing enzyme (858 aa).

The tract at residues 1 to 318 (MNPTDLHPIK…FPRPESDARA (318 aa)) is uridylyltransferase. The tract at residues 319–674 (IDEEFRSLHG…VRPTEEGSGL (356 aa)) is uridylyl-removing. The HD domain occupies 437 to 559 (VDQHTLAVIR…VKDERHLNAL (123 aa)). ACT domains are found at residues 675–756 (QIMV…LADV) and 789–858 (RLSV…LAGE).

The protein belongs to the GlnD family. Requires Mg(2+) as cofactor.

It catalyses the reaction [protein-PII]-L-tyrosine + UTP = [protein-PII]-uridylyl-L-tyrosine + diphosphate. The catalysed reaction is [protein-PII]-uridylyl-L-tyrosine + H2O = [protein-PII]-L-tyrosine + UMP + H(+). Its activity is regulated as follows. Uridylyltransferase (UTase) activity is inhibited by glutamine, while glutamine activates uridylyl-removing (UR) activity. In terms of biological role, modifies, by uridylylation and deuridylylation, the PII regulatory proteins (GlnB and homologs), in response to the nitrogen status of the cell that GlnD senses through the glutamine level. Under low glutamine levels, catalyzes the conversion of the PII proteins and UTP to PII-UMP and PPi, while under higher glutamine levels, GlnD hydrolyzes PII-UMP to PII and UMP (deuridylylation). Thus, controls uridylylation state and activity of the PII proteins, and plays an important role in the regulation of nitrogen assimilation and metabolism. This chain is Bifunctional uridylyltransferase/uridylyl-removing enzyme, found in Bordetella avium (strain 197N).